A 440-amino-acid chain; its full sequence is tRNA-2-methylthio-N(6)-dimethylallyladenosine synthase (440 aa).

In terms of domain architecture, MTTase N-terminal spans 7–123; that stretch reads NTFYIHTFGC…LPQLIEQARS (117 aa). Residues C16, C52, C86, C159, C163, and C166 each coordinate [4Fe-4S] cluster. Positions 145 to 375 constitute a Radical SAM core domain; the sequence is RQGSISAFVP…IDLQNTISGE (231 aa). A TRAM domain is found at 378–440; the sequence is QQAIGSVVEV…TSATLTGRPV (63 aa).

Belongs to the methylthiotransferase family. MiaB subfamily. In terms of assembly, monomer. It depends on [4Fe-4S] cluster as a cofactor.

Its subcellular location is the cytoplasm. It carries out the reaction N(6)-dimethylallyladenosine(37) in tRNA + (sulfur carrier)-SH + AH2 + 2 S-adenosyl-L-methionine = 2-methylsulfanyl-N(6)-dimethylallyladenosine(37) in tRNA + (sulfur carrier)-H + 5'-deoxyadenosine + L-methionine + A + S-adenosyl-L-homocysteine + 2 H(+). Its function is as follows. Catalyzes the methylthiolation of N6-(dimethylallyl)adenosine (i(6)A), leading to the formation of 2-methylthio-N6-(dimethylallyl)adenosine (ms(2)i(6)A) at position 37 in tRNAs that read codons beginning with uridine. This Pelodictyon phaeoclathratiforme (strain DSM 5477 / BU-1) protein is tRNA-2-methylthio-N(6)-dimethylallyladenosine synthase.